The following is a 293-amino-acid chain: Homoserine kinase (293 aa).

Arginine 80–alanine 90 contributes to the ATP binding site.

Belongs to the GHMP kinase family. Homoserine kinase subfamily.

It localises to the cytoplasm. The catalysed reaction is L-homoserine + ATP = O-phospho-L-homoserine + ADP + H(+). It functions in the pathway amino-acid biosynthesis; L-threonine biosynthesis; L-threonine from L-aspartate: step 4/5. In terms of biological role, catalyzes the ATP-dependent phosphorylation of L-homoserine to L-homoserine phosphate. The chain is Homoserine kinase from Halorubrum lacusprofundi (strain ATCC 49239 / DSM 5036 / JCM 8891 / ACAM 34).